Reading from the N-terminus, the 89-residue chain is Small ribosomal subunit protein uS15 (89 aa).

Belongs to the universal ribosomal protein uS15 family. As to quaternary structure, part of the 30S ribosomal subunit. Forms a bridge to the 50S subunit in the 70S ribosome, contacting the 23S rRNA.

One of the primary rRNA binding proteins, it binds directly to 16S rRNA where it helps nucleate assembly of the platform of the 30S subunit by binding and bridging several RNA helices of the 16S rRNA. In terms of biological role, forms an intersubunit bridge (bridge B4) with the 23S rRNA of the 50S subunit in the ribosome. This Chlorobaculum parvum (strain DSM 263 / NCIMB 8327) (Chlorobium vibrioforme subsp. thiosulfatophilum) protein is Small ribosomal subunit protein uS15.